The chain runs to 134 residues: Large-conductance mechanosensitive channel (134 aa).

Helical transmembrane passes span 16-36 (VIDL…VTAL) and 81-101 (GDFI…FIVV).

This sequence belongs to the MscL family. As to quaternary structure, homopentamer.

Its subcellular location is the cell inner membrane. Functionally, channel that opens in response to stretch forces in the membrane lipid bilayer. May participate in the regulation of osmotic pressure changes within the cell. This chain is Large-conductance mechanosensitive channel, found in Stenotrophomonas maltophilia (strain K279a).